Reading from the N-terminus, the 151-residue chain is Lipoprotein signal peptidase (151 aa).

Transmembrane regions (helical) follow at residues 3–23 (LYIILGLLILVGDQLLKGWIV), 59–79 (WFFYIVTIIAVGVIGYLFYTS), and 85–107 (LYRIGLTLMLAGALGNFIDRLHL). Residues aspartate 112 and aspartate 128 contribute to the active site. A helical transmembrane segment spans residues 123–143 (IFNVADTALTCGVICVFIAIL).

This sequence belongs to the peptidase A8 family.

Its subcellular location is the cell membrane. The catalysed reaction is Release of signal peptides from bacterial membrane prolipoproteins. Hydrolyzes -Xaa-Yaa-Zaa-|-(S,diacylglyceryl)Cys-, in which Xaa is hydrophobic (preferably Leu), and Yaa (Ala or Ser) and Zaa (Gly or Ala) have small, neutral side chains.. It functions in the pathway protein modification; lipoprotein biosynthesis (signal peptide cleavage). In terms of biological role, this protein specifically catalyzes the removal of signal peptides from prolipoproteins. The chain is Lipoprotein signal peptidase from Latilactobacillus sakei subsp. sakei (strain 23K) (Lactobacillus sakei subsp. sakei).